Consider the following 487-residue polypeptide: N-succinylglutamate 5-semialdehyde dehydrogenase (487 aa).

An NAD(+)-binding site is contributed by glycine 221–glycine 226. Catalysis depends on residues glutamate 244 and cysteine 278.

The protein belongs to the aldehyde dehydrogenase family. AstD subfamily.

The catalysed reaction is N-succinyl-L-glutamate 5-semialdehyde + NAD(+) + H2O = N-succinyl-L-glutamate + NADH + 2 H(+). It participates in amino-acid degradation; L-arginine degradation via AST pathway; L-glutamate and succinate from L-arginine: step 4/5. Catalyzes the NAD-dependent reduction of succinylglutamate semialdehyde into succinylglutamate. The sequence is that of N-succinylglutamate 5-semialdehyde dehydrogenase from Burkholderia cenocepacia (strain ATCC BAA-245 / DSM 16553 / LMG 16656 / NCTC 13227 / J2315 / CF5610) (Burkholderia cepacia (strain J2315)).